Consider the following 623-residue polypeptide: Kelch repeat and BTB domain-containing protein 2 (623 aa).

The 68-residue stretch at 31–98 (TDIVLIVEGT…AYTGNLAMND (68 aa)) folds into the BTB domain. One can recognise a BACK domain in the interval 133-229 (CVRLLSFADL…IRIDALSEVT (97 aa)). Ser-300 is subject to Phosphoserine. 5 Kelch repeats span residues 317 to 380 (DIYI…CCEG), 381 to 429 (HIYA…VVHD), 431 to 469 (IYVMTLNLMYCYFPRSDSWVEMAMRQTSRSFASAAAFGD), 470 to 529 (KIFY…RAVV), and 535 to 581 (CVFM…DFRC).

In terms of assembly, component of the BCR(KBTBD2) E3 ubiquitin ligase complex, at least composed of CUL3, KBTBD2 and RBX1. Interacts (via the BTB domain) with CUL3.

The protein operates within protein modification; protein ubiquitination. Functionally, substrate-specific adapter of a BCR (BTB-CUL3-RBX1) E3 ubiquitin ligase complex that acts as a regulator of the insulin signaling pathway, modulating insulin sensitivity by limiting PIK3R1/p85alpha abundance in adipocytes. Targets PIK3R1, the regulatory subunit of phosphatidylinositol 3-kinase (PI3K), for 'Lys-48'-linked polyubiquitination and proteasome-mediated degradation. The sequence is that of Kelch repeat and BTB domain-containing protein 2 (KBTBD2) from Pongo abelii (Sumatran orangutan).